Reading from the N-terminus, the 350-residue chain is MIVPIELAHTKNITYDITIDALPQLTFDTKVAVVTNPTVAGYHLQTLLAHIKAPQLEVITVPDGEEYKTLETVETILNELFEHKFDRKSLLIAFGGGVIGDMTGFTASLYQRGIDFIQIPTTLLSQVDASVGGKTGVNNRYGKNLIGAFYQPKAVYIDPAFLKTLPSREFSAGVAEIIKMAVMFDKDYFEFLVTADLSDEEVLKETIRRSVELKAWVVNQDEKEAGIRAVLNYGHTFGHVVENETGYTTYLHGEAVAIGMVMANALAVELGLLGETEADRIKALLEKASLPTHYTIKDVDDFYEHFFLDKKSANNSIKFILPEGIGGHKIVSDIDESVVKNVLKKFEEEV.

NAD(+) is bound by residues 63-68, 97-101, 121-122, lysine 134, lysine 143, and 161-164; these read DGEEYK, GVIGD, TT, and FLKT. Residues glutamate 176, histidine 235, and histidine 252 each contribute to the Zn(2+) site.

The protein belongs to the sugar phosphate cyclases superfamily. Dehydroquinate synthase family. Requires Co(2+) as cofactor. Zn(2+) serves as cofactor. The cofactor is NAD(+).

It localises to the cytoplasm. It carries out the reaction 7-phospho-2-dehydro-3-deoxy-D-arabino-heptonate = 3-dehydroquinate + phosphate. It participates in metabolic intermediate biosynthesis; chorismate biosynthesis; chorismate from D-erythrose 4-phosphate and phosphoenolpyruvate: step 2/7. Functionally, catalyzes the conversion of 3-deoxy-D-arabino-heptulosonate 7-phosphate (DAHP) to dehydroquinate (DHQ). In Sulfurovum sp. (strain NBC37-1), this protein is 3-dehydroquinate synthase.